A 259-amino-acid polypeptide reads, in one-letter code: Glutamate racemase (259 aa).

Residues 12 to 13 and 44 to 45 each bind substrate; these read DS and YG. Cys75 functions as the Proton donor/acceptor in the catalytic mechanism. Residue 76–77 coordinates substrate; that stretch reads NT. Residue Cys186 is the Proton donor/acceptor of the active site. Residue 187–188 participates in substrate binding; sequence TH.

Belongs to the aspartate/glutamate racemases family.

It carries out the reaction L-glutamate = D-glutamate. It participates in cell wall biogenesis; peptidoglycan biosynthesis. Functionally, provides the (R)-glutamate required for cell wall biosynthesis. The polypeptide is Glutamate racemase (Clostridium novyi (strain NT)).